We begin with the raw amino-acid sequence, 452 residues long: SAGA complex/transcription factor TFIID complex subunit Taf6 (452 aa).

The Histone-fold domain occupies 4–68 (TVWNIESIKD…TSADISSALR (65 aa)).

The protein belongs to the TAF6 family. In terms of assembly, component of the 1.8 MDa SAGA (Spt-Ada-Gcn5 acetyltransferase) complex, which is composed of 19 subunits tra1, spt7, taf5, ngg1/ada3, sgf73, spt20, spt8, taf12, taf6, hfi1/ada1, ubp8, gcn5, ada2, spt3, sgf29, taf10, taf9, sgf11 and sus1. The SAGA complex is composed of 4 modules, namely the HAT (histone acetyltransferase) module (gcn5, ada2, ngg1/ada3 and sgf29), the DUB (deubiquitinating) module (ubp8, sgf11, sgf73 and sus1), the core or TAF (TBP-associated factor) module (taf5, taf6, taf9, taf10 and taf12), and the Tra1 or SPT (Suppressor of Ty) module (tra1, hfi1/ada1, spt3, spt7, spt8 and spt20). The Tra1/SPT module binds activators, the core module recruits TBP (TATA-binding protein), the HAT module contains the histone H3 acetyltransferase gcn5, and the DUB module comprises the histone H2B deubiquitinase ubp8. Interacts with gcn5, taf5 and taf73. Component of the 1.2 MDa TFIID complex, which is composed of TATA-binding protein (TBP) and the 14 TBP-associated factors (TAFs). It comprises 1 copy of each taf1, taf2, taf3, taf7, taf8, taf11, taf13, 2 copies of each taf4, taf5, taf6, taf9, taf10, taf12, and 3 copies of taf14. In TFIID, taf6 heterodimerizes with taf9, forming ultimately an octamer consisting of a taf6-taf9 heterotetramer core flanked by taf4-taf12 dimers on either side, similar to the histone H2A-H2B-H3-H4 octamer.

It localises to the nucleus. Its function is as follows. Functions as a component of both the DNA-binding general transcription initiation factor complex TFIID and the transcription coactivator SAGA complex. Binding of TFIID to a promoter (with or without TATA element) is the initial step in pre-initiation complex (PIC) formation. TFIID plays a key role in the regulation of gene expression by RNA polymerase II through different activities such as transcription activator interaction, core promoter recognition and selectivity, TFIIA and TFIIB interaction, chromatin modification (histone acetylation by TAF1), facilitation of DNA opening and initiation of transcription. SAGA acts as a general cofactor required for essentially all RNA polymerase II transcription. At the promoters, SAGA is required for transcription pre-initiation complex (PIC) recruitment. It influences RNA polymerase II transcriptional activity through different activities such as TBP interaction (via core/TAF module) and promoter selectivity, interaction with transcription activators (via Tra1/SPT module), and chromatin modification through histone acetylation (via HAT module) and deubiquitination (via DUB module). SAGA preferentially acetylates histones H3 (to form H3K9ac, H3K14ac, H3K18ac and H3K23ac) and H2B and deubiquitinates histone H2B. SAGA interacts with DNA via upstream activating sequences (UASs). The sequence is that of SAGA complex/transcription factor TFIID complex subunit Taf6 from Schizosaccharomyces pombe (strain 972 / ATCC 24843) (Fission yeast).